The following is a 103-amino-acid chain: Urease subunit beta (103 aa).

Belongs to the urease beta subunit family. In terms of assembly, heterotrimer of UreA (gamma), UreB (beta) and UreC (alpha) subunits. Three heterotrimers associate to form the active enzyme.

It localises to the cytoplasm. The catalysed reaction is urea + 2 H2O + H(+) = hydrogencarbonate + 2 NH4(+). The protein operates within nitrogen metabolism; urea degradation; CO(2) and NH(3) from urea (urease route): step 1/1. This Blochmanniella floridana protein is Urease subunit beta.